The sequence spans 98 residues: NADH-ubiquinone oxidoreductase chain 4L (98 aa).

Helical transmembrane passes span 1–21 (MSLV…GLLM), 29–49 (SLLC…LMIL), and 61–81 (IILL…LVMV).

This sequence belongs to the complex I subunit 4L family. In terms of assembly, core subunit of respiratory chain NADH dehydrogenase (Complex I) which is composed of 45 different subunits.

The protein localises to the mitochondrion inner membrane. The enzyme catalyses a ubiquinone + NADH + 5 H(+)(in) = a ubiquinol + NAD(+) + 4 H(+)(out). Its function is as follows. Core subunit of the mitochondrial membrane respiratory chain NADH dehydrogenase (Complex I) which catalyzes electron transfer from NADH through the respiratory chain, using ubiquinone as an electron acceptor. Part of the enzyme membrane arm which is embedded in the lipid bilayer and involved in proton translocation. The sequence is that of NADH-ubiquinone oxidoreductase chain 4L (MT-ND4L) from Pantholops hodgsonii (Chiru).